Here is a 531-residue protein sequence, read N- to C-terminus: uncharacterized protein (531 aa).

Residues 1–28 (MNTKGIIAKLTAGALIANLLICPANTLA) form the signal peptide. SLH domains follow at residues 29 to 85 (EKKT…QINK), 86 to 149 (QAKP…IGDL), and 150 to 210 (PTQF…SKRM). Positions 335–517 (IIIDPGHGGI…AAEAIYAGIL (183 aa)) constitute a MurNAc-LAA domain.

The protein in the C-terminal section; belongs to the N-acetylmuramoyl-L-alanine amidase 3 family.

It localises to the secreted. The protein localises to the cell wall. Its subcellular location is the S-layer. This is an uncharacterized protein from Bacillus anthracis.